The primary structure comprises 231 residues: Small ribosomal subunit protein uS2 (231 aa).

The protein belongs to the universal ribosomal protein uS2 family.

In Blochmanniella floridana, this protein is Small ribosomal subunit protein uS2.